We begin with the raw amino-acid sequence, 434 residues long: Tryptophan--tRNA ligase (434 aa).

Residues 14 to 16 and 22 to 23 each bind ATP; these read TTS and GN. The short motif at 15-23 is the 'HIGH' region element; that stretch reads TSGTPHLGN. Residue Asp147 participates in L-tryptophan binding. ATP contacts are provided by residues 159-161, Leu199, and 206-210; these read GRD and KMSKS. The short motif at 206–210 is the 'KMSKS' region element; the sequence is KMSKS.

This sequence belongs to the class-I aminoacyl-tRNA synthetase family. Homodimer.

It localises to the cytoplasm. The enzyme catalyses tRNA(Trp) + L-tryptophan + ATP = L-tryptophyl-tRNA(Trp) + AMP + diphosphate + H(+). Catalyzes the attachment of tryptophan to tRNA(Trp). The chain is Tryptophan--tRNA ligase from Xylella fastidiosa (strain 9a5c).